Here is a 252-residue protein sequence, read N- to C-terminus: 5-oxoprolinase subunit A 1 (252 aa).

The protein belongs to the LamB/PxpA family. Forms a complex composed of PxpA, PxpB and PxpC.

It carries out the reaction 5-oxo-L-proline + ATP + 2 H2O = L-glutamate + ADP + phosphate + H(+). In terms of biological role, catalyzes the cleavage of 5-oxoproline to form L-glutamate coupled to the hydrolysis of ATP to ADP and inorganic phosphate. The polypeptide is 5-oxoprolinase subunit A 1 (Pseudomonas aeruginosa (strain ATCC 15692 / DSM 22644 / CIP 104116 / JCM 14847 / LMG 12228 / 1C / PRS 101 / PAO1)).